The primary structure comprises 932 residues: Isoleucine--tRNA ligase (932 aa).

The 'HIGH' region signature appears at 57–67 (PYANGDIHIGT). Glutamate 559 contributes to the L-isoleucyl-5'-AMP binding site. The short motif at 600 to 604 (KMSKS) is the 'KMSKS' region element. Lysine 603 serves as a coordination point for ATP. Residues cysteine 899, cysteine 902, cysteine 919, and cysteine 922 each coordinate Zn(2+).

This sequence belongs to the class-I aminoacyl-tRNA synthetase family. IleS type 1 subfamily. As to quaternary structure, monomer. Zn(2+) is required as a cofactor.

It localises to the cytoplasm. It carries out the reaction tRNA(Ile) + L-isoleucine + ATP = L-isoleucyl-tRNA(Ile) + AMP + diphosphate. Catalyzes the attachment of isoleucine to tRNA(Ile). As IleRS can inadvertently accommodate and process structurally similar amino acids such as valine, to avoid such errors it has two additional distinct tRNA(Ile)-dependent editing activities. One activity is designated as 'pretransfer' editing and involves the hydrolysis of activated Val-AMP. The other activity is designated 'posttransfer' editing and involves deacylation of mischarged Val-tRNA(Ile). This Caldanaerobacter subterraneus subsp. tengcongensis (strain DSM 15242 / JCM 11007 / NBRC 100824 / MB4) (Thermoanaerobacter tengcongensis) protein is Isoleucine--tRNA ligase.